A 105-amino-acid polypeptide reads, in one-letter code: Thioredoxin (105 aa).

A Thioredoxin domain is found at 2 to 105 (VKQIESKYAF…KLEATINELI (104 aa)). Residue lysine 3 is modified to N6-acetyllysine. Position 8 is an N6-succinyllysine (lysine 8). Residues cysteine 32 and cysteine 35 each act as nucleophile in the active site. A disulfide bridge connects residues cysteine 32 and cysteine 35. Lysine 39 carries the post-translational modification N6-acetyllysine. S-nitrosocysteine occurs at positions 62 and 69. Cysteine 73 carries the S-nitrosocysteine; alternate modification. At lysine 94 the chain carries N6-acetyllysine; alternate. Position 94 is an N6-succinyllysine; alternate (lysine 94).

It belongs to the thioredoxin family. Homodimer; disulfide-linked. Interacts with TXNIP through the redox-active site. Interacts with MAP3K5 and CASP3. Interacts with APEX1; the interaction stimulates the FOS/JUN AP-1 DNA-binding activity in a redox-dependent manner. In the fully reduced protein, both Cys-69 and Cys-73 are nitrosylated in response to nitric oxide (NO). When two disulfide bonds are present in the protein, only Cys-73 is nitrosylated. Cys-73 can serve as donor for nitrosylation of target proteins.

The protein resides in the nucleus. It localises to the cytoplasm. The protein localises to the secreted. Its function is as follows. Participates in various redox reactions through the reversible oxidation of its active center dithiol to a disulfide and catalyzes dithiol-disulfide exchange reactions. Plays a role in the reversible S-nitrosylation of cysteine residues in target proteins, and thereby contributes to the response to intracellular nitric oxide. Nitrosylates the active site Cys of CASP3 in response to nitric oxide (NO), and thereby inhibits caspase-3 activity. Induces the FOS/JUN AP-1 DNA binding activity in ionizing radiation (IR) cells through its oxidation/reduction status and stimulates AP-1 transcriptional activity. This Ovis aries (Sheep) protein is Thioredoxin (TXN).